A 61-amino-acid polypeptide reads, in one-letter code: Small ribosomal subunit protein uS14 (61 aa).

Zn(2+) is bound by residues Cys-24, Cys-27, Cys-40, and Cys-43.

The protein belongs to the universal ribosomal protein uS14 family. Zinc-binding uS14 subfamily. As to quaternary structure, part of the 30S ribosomal subunit. Contacts proteins S3 and S10. The cofactor is Zn(2+).

Its function is as follows. Binds 16S rRNA, required for the assembly of 30S particles and may also be responsible for determining the conformation of the 16S rRNA at the A site. In Nitratidesulfovibrio vulgaris (strain DSM 19637 / Miyazaki F) (Desulfovibrio vulgaris), this protein is Small ribosomal subunit protein uS14.